The sequence spans 201 residues: 3-isopropylmalate dehydratase small subunit (201 aa).

The protein belongs to the LeuD family. LeuD type 1 subfamily. In terms of assembly, heterodimer of LeuC and LeuD.

It catalyses the reaction (2R,3S)-3-isopropylmalate = (2S)-2-isopropylmalate. The protein operates within amino-acid biosynthesis; L-leucine biosynthesis; L-leucine from 3-methyl-2-oxobutanoate: step 2/4. Functionally, catalyzes the isomerization between 2-isopropylmalate and 3-isopropylmalate, via the formation of 2-isopropylmaleate. This is 3-isopropylmalate dehydratase small subunit from Ruegeria sp. (strain TM1040) (Silicibacter sp.).